Here is a 382-residue protein sequence, read N- to C-terminus: Alcohol dehydrogenase 1 (382 aa).

8 residues coordinate Zn(2+): Cys-49, Thr-51, His-71, Cys-101, Cys-104, Cys-107, Cys-115, and Cys-179. An alcohol contacts are provided by Thr-51 and His-71. NAD(+) is bound at residue Thr-51. Residues 204–209 (GLGAVG), Asp-228, Arg-233, Thr-275, Val-298, 298–300 (VGV), Phe-325, and Arg-375 each bind NAD(+).

The protein belongs to the zinc-containing alcohol dehydrogenase family. In terms of assembly, homodimer. It depends on Zn(2+) as a cofactor.

The protein resides in the cytoplasm. It carries out the reaction a primary alcohol + NAD(+) = an aldehyde + NADH + H(+). The enzyme catalyses a secondary alcohol + NAD(+) = a ketone + NADH + H(+). Its function is as follows. This protein is responsible for the conversion of alcohols to aldehydes in plants and is important for NAD metabolism during anaerobic respiration. The polypeptide is Alcohol dehydrogenase 1 (ADH1) (Petunia hybrida (Petunia)).